The primary structure comprises 130 residues: Large ribosomal subunit protein uL14 (130 aa).

This sequence belongs to the universal ribosomal protein uL14 family. As to quaternary structure, part of the 50S ribosomal subunit. Forms a cluster with proteins L3 and L19. In the 70S ribosome, L14 and L19 interact and together make contacts with the 16S rRNA in bridges B5 and B8.

In terms of biological role, binds to 23S rRNA. Forms part of two intersubunit bridges in the 70S ribosome. The protein is Large ribosomal subunit protein uL14 of Leptospira interrogans serogroup Icterohaemorrhagiae serovar copenhageni (strain Fiocruz L1-130).